We begin with the raw amino-acid sequence, 594 residues long: Chitooligosaccharidolytic beta-N-acetylglucosaminidase (594 aa).

An N-terminal signal peptide occupies residues 1–22 (MWSRRIPLFIFGVLVLILSVAA). 2 disulfide bridges follow: C31–C59 and C36–C55. N-linked (GlcNAc...) asparagine glycosylation occurs at N164. Catalysis depends on charge relay system residues D249 and H303. Disulfide bonds link C316–C373 and C326–C331. Residue E368 is the Charge relay system of the active site. Residue N375 is glycosylated (N-linked (GlcNAc...) asparagine). 2 disulfides stabilise this stretch: C478–C491 and C585–C592.

Belongs to the glycosyl hydrolase 20 family. Homodimer.

The catalysed reaction is Hydrolysis of terminal non-reducing N-acetyl-D-hexosamine residues in N-acetyl-beta-D-hexosaminides.. With respect to regulation, inhibited by O-(2-acetamido-2-deoxy-D-glucopyransylidene)-amino-N-phenylcarbamate (PUGNAc). Inhibited by thiabendazole (TMG)-chitotriomycin. Inhibited by 6-(dimethylamino)-2-(2-(((5-methyl-1,3,4-thiadiazol-2-yl)methyl)amino)ethyl)- 1H-benzo[de]isoquinoline-1,3(2H)-dione (Q2), a synthesized non-carbohydrate unsymmetrical dyad of naphthalimide and thiadiazole having a dimethylamino group at C4 of the naphthalimide. Inhibited poorly by N-acetyl-glucosamine (NAG)-thiazoline (NGT), but when the thiazoline ring of NGT is replaced by a bulky substituent such as in compound 1,2-dideoxy-2'-methylamino-alpha-D-glucopyranoso-[2,1-d]-Delta2'-thiazoline (NMAGT), the inhibition constant Ki is lowered 600-fold compared to that of NGT. Inhibited by berberine, berberine analogs thalifendine and palmatine, and berberine derivative SYSU-1, but not by berberine analog tetrahydroberberine. In terms of biological role, hydrolyzes one beta-GlcNAc unit at a time from the non-reducing ends of substrates, with a preference for shorter substrates. The 2-acetamido group and the beta-glycoside bond linkage in the substrate are required for its activity. Active with p-nitrophenyl (pNP)-beta-GlcNAc, pNP-beta-GalNAc and chitooligosaccharides (degree of polymerization from 2 to 6), but not with the complex N-glycan substrate (GlcNAcbeta-1,2Manalpha-1,6)(GlcNAcbeta-1,2Manalpha-1,3)Manbeta-1,4GlcNAcbeta-1,4GlcNAc-PA (GnGn-PA), pNP-alpha-GlcNAc or with the long polymer colloidal chitin. Involved in chitin catabolism. Involved in the degradation of old cuticle during the pupation stage. This is Chitooligosaccharidolytic beta-N-acetylglucosaminidase from Ostrinia furnacalis (Asian corn borer).